The chain runs to 320 residues: Cytochrome f (320 aa).

A signal peptide spans 1–35 (MQTRKTLSWIKEEITRSISVSLMIYIITGAYISNA). Heme is bound by residues Y36, C56, C59, and H60. A helical transmembrane segment spans residues 286–306 (VQGLLFFLASVILAQIFLVLK).

Belongs to the cytochrome f family. In terms of assembly, the 4 large subunits of the cytochrome b6-f complex are cytochrome b6, subunit IV (17 kDa polypeptide, petD), cytochrome f and the Rieske protein, while the 4 small subunits are PetG, PetL, PetM and PetN. The complex functions as a dimer. It depends on heme as a cofactor.

It is found in the plastid. Its subcellular location is the chloroplast thylakoid membrane. In terms of biological role, component of the cytochrome b6-f complex, which mediates electron transfer between photosystem II (PSII) and photosystem I (PSI), cyclic electron flow around PSI, and state transitions. This is Cytochrome f from Populus trichocarpa (Western balsam poplar).